The following is a 103-amino-acid chain: Large ribosomal subunit protein bL21 (103 aa).

It belongs to the bacterial ribosomal protein bL21 family. As to quaternary structure, part of the 50S ribosomal subunit. Contacts protein L20.

Its function is as follows. This protein binds to 23S rRNA in the presence of protein L20. The polypeptide is Large ribosomal subunit protein bL21 (Salmonella schwarzengrund (strain CVM19633)).